Consider the following 133-residue polypeptide: ATP synthase epsilon chain (133 aa).

Belongs to the ATPase epsilon chain family. In terms of assembly, F-type ATPases have 2 components, CF(1) - the catalytic core - and CF(0) - the membrane proton channel. CF(1) has five subunits: alpha(3), beta(3), gamma(1), delta(1), epsilon(1). CF(0) has three main subunits: a, b and c.

The protein localises to the cell membrane. Functionally, produces ATP from ADP in the presence of a proton gradient across the membrane. The protein is ATP synthase epsilon chain of Clostridium perfringens (strain ATCC 13124 / DSM 756 / JCM 1290 / NCIMB 6125 / NCTC 8237 / Type A).